We begin with the raw amino-acid sequence, 200 residues long: GTP-binding protein ypt2 (200 aa).

Residue 16–23 (GDSGVGKS) coordinates GTP. The Effector region signature appears at 38–46 (FITTIGIDF). Residues 64-68 (DTAGQ) and 122-125 (NKCD) contribute to the GTP site. Residues C199 and C200 are each lipidated (S-geranylgeranyl cysteine).

Belongs to the small GTPase superfamily. Rab family.

It is found in the cell membrane. Its function is as follows. Protein transport. Probably involved in vesicular traffic. This Schizosaccharomyces pombe (strain 972 / ATCC 24843) (Fission yeast) protein is GTP-binding protein ypt2 (ypt2).